Consider the following 370-residue polypeptide: DNA replication and repair protein RecF (370 aa).

An ATP-binding site is contributed by 30–37; sequence GENAQGKT.

Belongs to the RecF family. In terms of assembly, recruited to foci following DNA damage; probably interacts with RecO.

The protein resides in the cytoplasm. Its subcellular location is the nucleoid. The RecF protein is involved in DNA metabolism; it is required for DNA replication and normal SOS inducibility. RecF binds preferentially to single-stranded, linear DNA. It also seems to bind ATP. Is recruited to repair centers, foci that are the site of double-strand DNA break(s) after RecN and RecO; recruitment may depend on RecO. A positive modulator of RecA. This Bacillus subtilis (strain 168) protein is DNA replication and repair protein RecF.